The primary structure comprises 1065 residues: Probable importin-7 homolog (1065 aa).

The region spanning 25–98 is the Importin N-terminal domain; the sequence is AEAQLQQIKV…KENLIDLLVH (74 aa). Positions 958 to 996 are disordered; sequence ENGGDLGEDEGDNFDDQNDDDDQDSEEDLFEDEDTPDFE. Residues 963–996 are compositionally biased toward acidic residues; that stretch reads LGEDEGDNFDDQNDDDDQDSEEDLFEDEDTPDFE.

It belongs to the importin beta family.

The protein resides in the cytoplasm. The protein localises to the nucleus. In terms of biological role, may function in nuclear protein import. The sequence is that of Probable importin-7 homolog from Dictyostelium discoideum (Social amoeba).